The primary structure comprises 398 residues: Type II secretion system protein L (398 aa).

Residues 1–248 lie on the Cytoplasmic side of the membrane; it reads MNNHHTSSAA…RQPTPRRWRP (248 aa). The helical transmembrane segment at 249-265 threads the bilayer; sequence VIVAALALLLLWSSNCL. Topologically, residues 266-398 are periplasmic; the sequence is HDHLMLGQQA…GRLTLEGNDA (133 aa).

Belongs to the GSP L family. In terms of assembly, type II secretion system is composed of four main components: the outer membrane complex, the inner membrane complex, the cytoplasmic secretion ATPase and the periplasm-spanning pseudopilus. Forms homodimers. Interacts with PulM/GspM. Interacts with PulE/GspE and PulF/GspF.

The protein resides in the cell inner membrane. Its function is as follows. Inner membrane component of the type II secretion system required for the energy-dependent secretion of extracellular factors such as proteases and toxins from the periplasm. Plays a role in the complex assembly and recruits PulM resulting in a stable complex in the inner membrane. Provides thus a link between the energy-providing PulE protein in the cytoplasm and the rest of the T2SS machinery. This is Type II secretion system protein L (pulL) from Klebsiella pneumoniae.